Consider the following 303-residue polypeptide: MDDEEGNATLIDEISVLEARRDVLLDELKSLDNATLSDLVQKPELSKNLSVNNEFLKETPLNQPALHYDRLSGISFFQPNDPEELSRKTLLVKNKKTGAIETAPSIPLLGVRFDIMLNPVNIGFTNLSENPISSASGMDEELEGGNRFDVPYYIIFRVFHDSFALYKYTIPSFLNIQEWADEYLTGKNPERFRIFLWKVDKLLTAYICRKNALLQINKSLTIDGTNISANLSCTHLVIQIPKVIQATLVCSSESTRVVKSRIYQYSDENWKRDHRLELSLLDNKRWVNILVSHLTAPESHASL.

This sequence belongs to the CENP-O/MCM21 family. In terms of assembly, component of the heterotetrameric kinetochore subcomplex COMA, which consists of fta2, fta7, mal2 and mis17. The COMA subcomplex is part of a larger constitutive centromere-associated network (CCAN) (also known as central kinetochore Sim4 complex in fission yeast), which is composed of at least cnl2, cnp3, cnp20, fta1, fta2, fta3, fta4, fta6, fta7, mal2, mhf1, mhf2, mis6, mis15, mis17, sim4 and wip1.

It is found in the nucleus. The protein localises to the chromosome. It localises to the centromere. The protein resides in the kinetochore. In terms of biological role, component of the kinetochore, a multiprotein complex that assembles on centromeric DNA and attaches chromosomes to spindle microtubules, mediating chromosome segregation and sister chromatid segregation during meiosis and mitosis. Component of the inner kinetochore COMA complex, which connects centromere-associated proteins and the outer kinetochore. COMA interacts with other inner kinetochore proteins to form the inner kinetochore constitutive centromere-associated network (CCAN), which serves as a structural platform for outer kinetochore assembly. The sequence is that of Inner kinetochore subunit mal2 (mal2) from Schizosaccharomyces pombe (strain 972 / ATCC 24843) (Fission yeast).